Reading from the N-terminus, the 545-residue chain is Chaperonin GroEL 1 (545 aa).

Residues T30 to P33, K51, D87 to T91, G415, and D495 each bind ATP.

It belongs to the chaperonin (HSP60) family. In terms of assembly, forms a cylinder of 14 subunits composed of two heptameric rings stacked back-to-back. Interacts with the co-chaperonin GroES.

It localises to the cytoplasm. The catalysed reaction is ATP + H2O + a folded polypeptide = ADP + phosphate + an unfolded polypeptide.. In terms of biological role, together with its co-chaperonin GroES, plays an essential role in assisting protein folding. The GroEL-GroES system forms a nano-cage that allows encapsulation of the non-native substrate proteins and provides a physical environment optimized to promote and accelerate protein folding. The chain is Chaperonin GroEL 1 from Rhizobium etli (strain ATCC 51251 / DSM 11541 / JCM 21823 / NBRC 15573 / CFN 42).